Consider the following 85-residue polypeptide: Large ribosomal subunit protein bL27 (85 aa).

Residues 1–21 (MAHKKGVGSSRNGRDSDGQRL) are disordered.

The protein belongs to the bacterial ribosomal protein bL27 family.

The chain is Large ribosomal subunit protein bL27 from Citrifermentans bemidjiense (strain ATCC BAA-1014 / DSM 16622 / JCM 12645 / Bem) (Geobacter bemidjiensis).